The primary structure comprises 178 residues: MSGGKYVDSEGHLYTAPIREQGNIYKPNNRDMAEEMHEKQVYDAHTKEIDLVNRDPKHLNDDVVKIDFEDVIAEPEGTHSFDGIWKASFTTFTVTKYWFYRLLSALFGIPMALIWGIYFAILSFLHIWAVVPCIKSFLIEIQCISRVYSIYVHTFCDPLFEAIGKIFSSIRINMQKEI.

Ser2 carries the N-acetylserine modification. Ser2 carries the phosphoserine modification. The tract at residues 2-94 (SGGKYVDSEG…WKASFTTFTV (93 aa)) is required for homooligomerization. Residues 2–104 (SGGKYVDSEG…TKYWFYRLLS (103 aa)) lie on the Cytoplasmic side of the membrane. Lys5 carries the post-translational modification N6-acetyllysine; alternate. Lys5 is covalently cross-linked (Glycyl lysine isopeptide (Lys-Gly) (interchain with G-Cter in ubiquitin); alternate). A Phosphotyrosine modification is found at Tyr6. Ser9 is modified (phosphoserine). Phosphotyrosine; by ABL1 is present on Tyr14. Residue Tyr25 is modified to Phosphotyrosine. Glycyl lysine isopeptide (Lys-Gly) (interchain with G-Cter in ubiquitin) cross-links involve residues Lys26, Lys39, Lys47, and Lys57. Residues 82-94 (DGIWKASFTTFTV) are interaction with CAVIN3. The helical intramembrane region spans 105–125 (ALFGIPMALIWGIYFAILSFL). The Cytoplasmic segment spans residues 126–178 (HIWAVVPCIKSFLIEIQCISRVYSIYVHTFCDPLFEAIGKIFSSIRINMQKEI). An interacts with SPRY1, SPRY2, SPRY3 and SPRY4 region spans residues 131 to 142 (VPCIKSFLIEIQ). S-palmitoyl cysteine attachment occurs at residues Cys133, Cys143, and Cys156. The tract at residues 149-160 (SIYVHTFCDPLF) is interacts with SPRY1, SPRY2, and SPRY4. An interacts with SPRY1, SPRY2, SPRY3 and SPRY4 region spans residues 167-178 (FSSIRINMQKEI).

It belongs to the caveolin family. Homooligomer. Interacts with GLIPR2. Interacts with NOSTRIN. Interacts with SNAP25 and STX1A. Interacts (via the N-terminus) with DPP4; the interaction is direct. Interacts with CTNNB1, CDH1 and JUP. Interacts with PACSIN2; this interaction induces membrane tubulation. Interacts with SLC7A9. Interacts with BMX and BTK. Interacts with TGFBR1. Interacts with CAVIN3 (via leucine-zipper domain) in a cholesterol-sensitive manner. Interacts with CAVIN1. Interacts with EHD2 in a cholesterol-dependent manner. Forms a ternary complex with UBXN6 and VCP; mediates CAV1 targeting to lysosomes for degradation. Interacts with ABCG1; this interaction regulates ABCG1-mediated cholesterol efflux. Interacts with NEU3; this interaction enhances NEU3 sialidase activity within caveola. Interacts (via C-terminus) with SPRY1, SPRY2 (via C-terminus), SPRY3, and SPRY4. Interacts with IGFBP5; this interaction allows trafficking of IGFBP5 from the plasma membrane to the nucleus. Phosphorylated at Tyr-14 by ABL1 in response to oxidative stress. Post-translationally, ubiquitinated. Undergo monoubiquitination and multi- and/or polyubiquitination. Monoubiquitination of N-terminal lysines promotes integration in a ternary complex with UBXN6 and VCP which promotes oligomeric CAV1 targeting to lysosomes for degradation. Ubiquitinated by ZNRF1; leading to degradation and modulation of the TLR4-mediated immune response.

The protein localises to the golgi apparatus membrane. It localises to the cell membrane. The protein resides in the membrane. Its subcellular location is the caveola. It is found in the membrane raft. Its function is as follows. May act as a scaffolding protein within caveolar membranes. Forms a stable heterooligomeric complex with CAV2 that targets to lipid rafts and drives caveolae formation. Mediates the recruitment of CAVIN proteins (CAVIN1/2/3/4) to the caveolae. Interacts directly with G-protein alpha subunits and can functionally regulate their activity. Involved in the costimulatory signal essential for T-cell receptor (TCR)-mediated T-cell activation. Its binding to DPP4 induces T-cell proliferation and NF-kappa-B activation in a T-cell receptor/CD3-dependent manner. Recruits CTNNB1 to caveolar membranes and may regulate CTNNB1-mediated signaling through the Wnt pathway. Negatively regulates TGFB1-mediated activation of SMAD2/3 by mediating the internalization of TGFBR1 from membrane rafts leading to its subsequent degradation. Binds 20(S)-hydroxycholesterol (20(S)-OHC). The sequence is that of Caveolin-1 (CAV1) from Loxodonta africana (African elephant).